The sequence spans 474 residues: 3-isopropylmalate dehydratase large subunit (474 aa).

C353, C414, and C417 together coordinate [4Fe-4S] cluster.

It belongs to the aconitase/IPM isomerase family. LeuC type 1 subfamily. Heterodimer of LeuC and LeuD. Requires [4Fe-4S] cluster as cofactor.

The enzyme catalyses (2R,3S)-3-isopropylmalate = (2S)-2-isopropylmalate. It participates in amino-acid biosynthesis; L-leucine biosynthesis; L-leucine from 3-methyl-2-oxobutanoate: step 2/4. Its function is as follows. Catalyzes the isomerization between 2-isopropylmalate and 3-isopropylmalate, via the formation of 2-isopropylmaleate. This Xylella fastidiosa (strain M12) protein is 3-isopropylmalate dehydratase large subunit.